The primary structure comprises 628 residues: Basal cell adhesion molecule (628 aa).

Positions Met1–Ala31 are cleaved as a signal peptide. Ig-like V-type domains follow at residues Glu32 to Lys142 and Pro150 to Gly253. At Glu32 to Ala547 the chain is on the extracellular side. Intrachain disulfides connect Cys53-Cys125, Cys172-Cys237, and Cys291-Cys337. Ig-like C2-type domains are found at residues Pro254–Glu355, Glu355–Arg441, and Pro448–Gly538. 3 N-linked (GlcNAc...) asparagine glycosylation sites follow: Asn321, Asn330, and Asn378. Cystine bridges form between Cys384–Cys424 and Cys473–Cys522. Residues Gly548 to Phe568 form a helical membrane-spanning segment. Residues Tyr569–Cys628 lie on the Cytoplasmic side of the membrane. The disordered stretch occupies residues Cys580 to Cys628. 4 positions are modified to phosphoserine: Ser596, Ser598, Ser600, and Ser621. Residues Ala613–Cys628 show a composition bias toward gly residues.

Homodimer. Interacts with ITGA4:ITGB1. Interacts with spectrins SPTA1 and SPTB1. Post-translationally, epinephrine-stimulated phosphorylation of Ser-621 by PKA enhances adhesion to laminin. Ser-621 can also be phosphorylated by AKT1.

The protein resides in the cell membrane. Functionally, transmembrane glycoprotein that functions as both a receptor and an adhesion molecule playing a crucial role in cell adhesion, motility, migration and invasion. Extracellular domain enables binding to extracellular matrix proteins, such as laminin, integrin and other ligands while its intracellular domain interacts with cytoskeletal proteins like hemoglobin, facilitating cell signal transduction. Serves as a receptor for laminin alpha-5/LAMA5 to promote cell adhesion. Mechanistically, JAK2 induces BCAM phosphorylation and activates its adhesion to laminin by stimulating a Rap1/AKT signaling pathway in the absence of EPOR. The chain is Basal cell adhesion molecule (BCAM) from Bos taurus (Bovine).